Reading from the N-terminus, the 98-residue chain is NADH-ubiquinone oxidoreductase chain 4L (98 aa).

3 helical membrane-spanning segments follow: residues Met1–Ile21, Ser28–Ile48, and Leu61–Ile81.

The protein belongs to the complex I subunit 4L family. Core subunit of respiratory chain NADH dehydrogenase (Complex I) which is composed of 45 different subunits.

It is found in the mitochondrion inner membrane. It catalyses the reaction a ubiquinone + NADH + 5 H(+)(in) = a ubiquinol + NAD(+) + 4 H(+)(out). Core subunit of the mitochondrial membrane respiratory chain NADH dehydrogenase (Complex I) which catalyzes electron transfer from NADH through the respiratory chain, using ubiquinone as an electron acceptor. Part of the enzyme membrane arm which is embedded in the lipid bilayer and involved in proton translocation. This chain is NADH-ubiquinone oxidoreductase chain 4L (MT-ND4L), found in Thylamys elegans (Elegant fat-tailed mouse opossum).